The sequence spans 482 residues: Cis-aconitate decarboxylase-like protein oryM (482 aa).

The protein belongs to the PrpD family.

It participates in secondary metabolite biosynthesis. Its function is as follows. Cis-aconitate decarboxylase-like protein; part of the gene cluster that mediates the biosynthesis of oryzines, natural products with an unusual maleidride backbone. The two subunits of the fungal fatty acid synthase oryfasA and oryfasB probably form octenoic acid. This fatty acid is most likely activated by the acyl-CoA ligase oryP to give octenyl-CoA before the citrate synthase-like protein oryE catalyzes condensation with oxaloacetate to form tricarboxylic acid. The next steps of the pathways are conjectural, but a favorite possible route has been proposed, beginning with decarboxylation and concomitant dehydration by the decarboxylase oryM, followed by tautomerization, which may lead to the production of a diene intermediate. Reduction of this diene intermediate could give the known metabolite piliformic acid. On the pathway to oryzine B and oryzine A, however, hydroxylation of the diene by the alpha-ketoglutarate-dependent dioxygenase oryG and lactonisation by the lactonohydrolases oryH or oryL could give oryzine B directly. Finally, enoyl reduction by the dehydrogenase oryD would then convert oryzine B into oryzine A. The protein is Cis-aconitate decarboxylase-like protein oryM of Aspergillus oryzae (strain ATCC 42149 / RIB 40) (Yellow koji mold).